The sequence spans 253 residues: Discoidin-1 subunit B/C (253 aa).

Serine 2 is modified (N-acetylserine). Residues 2–152 (STQGLVQLIS…ISLRCEFYTQ (151 aa)) enclose the F5/8 type C domain. The short motif at 79–81 (RGD) is the Cell attachment site element.

In terms of assembly, tetramer of four different chains (A to D). In terms of tissue distribution, stalk cells.

It localises to the cytoplasm. In terms of biological role, galactose- and N-acetylgalactosamine-binding lectin. May play a role in cell-substratum adhesion rather than in cell-cell adhesion. May be necessary for the maintenance of normal elongate morphology during aggregation. This is Discoidin-1 subunit B/C (dscC-1) from Dictyostelium discoideum (Social amoeba).